The sequence spans 354 residues: Putative Xaa-Pro aminopeptidase (354 aa).

Mn(2+) contacts are provided by aspartate 213, aspartate 224, histidine 290, glutamate 319, and glutamate 333.

It belongs to the peptidase M24B family. Mn(2+) serves as cofactor.

It catalyses the reaction Release of any N-terminal amino acid, including proline, that is linked to proline, even from a dipeptide or tripeptide.. This Mycoplasma pneumoniae (strain ATCC 29342 / M129 / Subtype 1) (Mycoplasmoides pneumoniae) protein is Putative Xaa-Pro aminopeptidase (pepP).